The chain runs to 519 residues: 2,3-bisphosphoglycerate-independent phosphoglycerate mutase (519 aa).

Mn(2+) contacts are provided by D18 and S68. The Phosphoserine intermediate role is filled by S68. Substrate is bound by residues H129, 159–160 (RD), R191, R197, 267–270 (RADR), and K341. Residues D408, H412, D449, H450, and H468 each contribute to the Mn(2+) site.

It belongs to the BPG-independent phosphoglycerate mutase family. As to quaternary structure, monomer. It depends on Mn(2+) as a cofactor.

The catalysed reaction is (2R)-2-phosphoglycerate = (2R)-3-phosphoglycerate. The protein operates within carbohydrate degradation; glycolysis; pyruvate from D-glyceraldehyde 3-phosphate: step 3/5. Its function is as follows. Catalyzes the interconversion of 2-phosphoglycerate and 3-phosphoglycerate. This Coxiella burnetii (strain RSA 493 / Nine Mile phase I) protein is 2,3-bisphosphoglycerate-independent phosphoglycerate mutase.